The chain runs to 253 residues: Glucosamine-6-phosphate deaminase (253 aa).

Asp65 serves as the catalytic Proton acceptor; for enolization step. Asn133 functions as the For ring-opening step in the catalytic mechanism. His135 functions as the Proton acceptor; for ring-opening step in the catalytic mechanism. Residue Glu140 is the For ring-opening step of the active site.

The protein belongs to the glucosamine/galactosamine-6-phosphate isomerase family. NagB subfamily.

The catalysed reaction is alpha-D-glucosamine 6-phosphate + H2O = beta-D-fructose 6-phosphate + NH4(+). It functions in the pathway amino-sugar metabolism; N-acetylneuraminate degradation; D-fructose 6-phosphate from N-acetylneuraminate: step 5/5. In terms of biological role, catalyzes the reversible isomerization-deamination of glucosamine 6-phosphate (GlcN6P) to form fructose 6-phosphate (Fru6P) and ammonium ion. The protein is Glucosamine-6-phosphate deaminase of Corynebacterium efficiens (strain DSM 44549 / YS-314 / AJ 12310 / JCM 11189 / NBRC 100395).